Reading from the N-terminus, the 310-residue chain is Malate dehydrogenase (310 aa).

Residues 7-13 (GAAGGIG) and Asp-34 contribute to the NAD(+) site. Residues Arg-81 and Arg-87 each contribute to the substrate site. NAD(+)-binding positions include Asn-94 and 117–119 (ITN). Substrate contacts are provided by Asn-119 and Arg-153. Residue His-177 is the Proton acceptor of the active site. Position 227 (Met-227) interacts with NAD(+).

It belongs to the LDH/MDH superfamily. MDH type 1 family. In terms of assembly, homodimer.

The catalysed reaction is (S)-malate + NAD(+) = oxaloacetate + NADH + H(+). In terms of biological role, catalyzes the reversible oxidation of malate to oxaloacetate. This is Malate dehydrogenase from Pseudoalteromonas translucida (strain TAC 125).